The primary structure comprises 278 residues: 1-acyl-sn-glycerol-3-phosphate acyltransferase beta (278 aa).

The first 23 residues, 1-23, serve as a signal peptide directing secretion; the sequence is MELWPCLAAALLLLLLLVQLSRA. The Lumenal portion of the chain corresponds to 24–29; that stretch reads AEFYAK. A helical membrane pass occupies residues 30–50; sequence VALYCALCFTVSAVASLVCLL. Residues 51–121 are Cytoplasmic-facing; the sequence is RHGGRTVENM…PERCVQIAKR (71 aa). The HXXXXD motif motif lies at 98 to 103; sequence HQSILD. Residues 122 to 142 form a helical membrane-spanning segment; that stretch reads ELLFLGPVGLIMYLGGVFFIN. Residues 143–278 lie on the Lumenal side of the membrane; sequence RQRSSTAMTV…TAGSGVQPAQ (136 aa). The short motif at 172-175 is the EGTR motif element; the sequence is EGTR.

Belongs to the 1-acyl-sn-glycerol-3-phosphate acyltransferase family. In terms of tissue distribution, expressed predominantly in adipose tissue, pancreas and liver.

Its subcellular location is the endoplasmic reticulum membrane. The enzyme catalyses a 1-acyl-sn-glycero-3-phosphate + an acyl-CoA = a 1,2-diacyl-sn-glycero-3-phosphate + CoA. The catalysed reaction is 1-(9Z-octadecenoyl)-sn-glycero-3-phosphate + (9Z)-octadecenoyl-CoA = 1,2-di-(9Z-octadecenoyl)-sn-glycero-3-phosphate + CoA. It carries out the reaction 1-(9Z-octadecenoyl)-sn-glycero-3-phosphate + hexadecanoyl-CoA = 1-(9Z)-octadecenoyl-2-hexadecanoyl-sn-glycero-3-phosphate + CoA. It catalyses the reaction heptadecanoyl-CoA + 1-(9Z-octadecenoyl)-sn-glycero-3-phosphate = 1-(9Z)-octadecenoyl-2-heptadecanoyl-sn-glycero-3-phosphate + CoA. The enzyme catalyses 1-(9Z-octadecenoyl)-sn-glycero-3-phosphate + (9Z,12Z)-octadecadienoyl-CoA = 1-(9Z)-octadecenoyl-2-(9Z,12Z)-octadecadienoyl-sn-glycero-3-phosphate + CoA. The catalysed reaction is 1-(9Z-octadecenoyl)-sn-glycero-3-phosphate + tetradecanoyl-CoA = 1-(9Z)-octadecenoyl-2-tetradecanoyl-sn-glycero-3-phosphate + CoA. It carries out the reaction pentadecanoyl-CoA + 1-(9Z-octadecenoyl)-sn-glycero-3-phosphate = 1-(9Z)-octadecenoyl-2-pentadecanoyl-sn-glycero-3-phosphate + CoA. It catalyses the reaction 1-hexadecanoyl-sn-glycero-3-phosphate + (9Z)-octadecenoyl-CoA = 1-hexadecanoyl-2-(9Z-octadecenoyl)-sn-glycero-3-phosphate + CoA. The enzyme catalyses 1-tetradecanoyl-sn-glycerol 3-phosphate + (9Z)-octadecenoyl-CoA = 1-tetradecanoyl-2-(9Z)-octadecenoyl-sn-glycero-3-phosphate + CoA. The catalysed reaction is 1-(9Z,12Z,15Z)-octadecatrienoyl-sn-glycero-3-phosphate + (9Z)-octadecenoyl-CoA = 1-(9Z,12Z,15Z)-octadecatrienoyl-2-(9Z)-octadecenoyl-sn-glycero-3-phosphate + CoA. It carries out the reaction 1-(6Z,9Z,12Z-octadecatrienoyl)-sn-glycero-3-phosphate + (9Z)-octadecenoyl-CoA = (6Z,9Z,12Z)-octadecatrienoyl-2-(9Z)-octadecenoyl-sn-glycero-3-phosphate + CoA. It catalyses the reaction 1-eicosanoyl-sn-glycero-3-phosphate + (9Z)-octadecenoyl-CoA = 1-eicosanoyl-2-(9Z)-octadecenoyl-sn-glycero-3-phosphate + CoA. The enzyme catalyses 1-hexadecanoyl-sn-glycero-3-phosphate + octadecanoyl-CoA = 1-hexadecanoyl-2-octadecanoyl-sn-glycero-3-phosphate + CoA. The catalysed reaction is 1-hexadecanoyl-sn-glycero-3-phosphate + (5Z,8Z,11Z,14Z)-eicosatetraenoyl-CoA = 1-hexadecanoyl-2-(5Z,8Z,11Z,14Z-eicosatetraenoyl)-sn-glycero-3-phosphate + CoA. It carries out the reaction 1-hexadecanoyl-sn-glycero-3-phosphate + hexadecanoyl-CoA = 1,2-dihexadecanoyl-sn-glycero-3-phosphate + CoA. It catalyses the reaction 1-hexadecanoyl-sn-glycero-3-phosphate + tetradecanoyl-CoA = 1-hexadecanoyl-2-tetradecanoyl-sn-glycero-3-phosphate + CoA. The enzyme catalyses (11Z)-octadecenoyl-CoA + 1-(9Z-octadecenoyl)-sn-glycero-3-phosphate = 1-(9Z)-octadecenoyl-2-(11Z)-octadecenoyl-sn-glycero-3-phosphate + CoA. It functions in the pathway phospholipid metabolism; CDP-diacylglycerol biosynthesis; CDP-diacylglycerol from sn-glycerol 3-phosphate: step 2/3. Converts 1-acyl-sn-glycerol-3-phosphate (lysophosphatidic acid or LPA) into 1,2-diacyl-sn-glycerol-3-phosphate (phosphatidic acid or PA) by incorporating an acyl moiety at the sn-2 position of the glycerol backbone. This Homo sapiens (Human) protein is 1-acyl-sn-glycerol-3-phosphate acyltransferase beta (AGPAT2).